A 2241-amino-acid polypeptide reads, in one-letter code: Large tegument protein deneddylase (2241 aa).

Residues 1–238 form a deubiquitination activity region; the sequence is MKVTQASCHQ…IDLTGVVRES (238 aa). A Peptidase C76 domain is found at 4–226; sequence TQASCHQGDI…AARLVSTYRD (223 aa). Catalysis depends on residues Cys-24, Asp-160, and His-162. The disordered stretch occupies residues 239–314; it reads ADTAATTTTA…STTSKTLATA (76 aa). The segment covering 240 to 250 has biased composition (low complexity); the sequence is DTAATTTTAAP. Residues 251–268 are compositionally biased toward pro residues; the sequence is SLPPLPDPIVDPGCPPGV. A compositionally biased stretch (low complexity) spans 304-314; it reads PSTTSKTLATA. The segment at 327–331 is interaction with inner tegument protein; sequence SSAVP. Disordered regions lie at residues 1187 to 1230 and 2118 to 2152; these read MTET…PPAD and PIARVQQPPRRHRHRAAAAADDDGQIDHAQDDTSR. Basic and acidic residues-rich tracts occupy residues 1190 to 1199 and 2142 to 2152; these read TSERLDRSLR and QIDHAQDDTSR.

The protein belongs to the herpesviridae large tegument protein family. In terms of assembly, interacts with host CUL1 and CUL4A; these interactions inhibit the E3 ligase activity of cullins. Interacts with inner tegument protein. Interacts with capsid vertex specific component CVC2. Interacts with the major capsid protein/MCP.

It localises to the virion tegument. Its subcellular location is the host cytoplasm. It is found in the host nucleus. It carries out the reaction Thiol-dependent hydrolysis of ester, thioester, amide, peptide and isopeptide bonds formed by the C-terminal Gly of ubiquitin (a 76-residue protein attached to proteins as an intracellular targeting signal).. Large tegument protein that plays multiple roles in the viral cycle. During viral entry, remains associated with the capsid while most of the tegument is detached and participates in the capsid transport toward the host nucleus. Plays a role in the routing of the capsid at the nuclear pore complex and subsequent uncoating. Within the host nucleus, acts as a deneddylase and promotes the degradation of nuclear CRLs (cullin-RING ubiquitin ligases) and thereby stabilizes nuclear CRL substrates, while cytoplasmic CRLs remain unaffected. These modifications prevent host cell cycle S-phase progression and create a favorable environment allowing efficient viral genome replication. Participates later in the secondary envelopment of capsids. Indeed, plays a linker role for the association of the outer viral tegument to the capsids together with the inner tegument protein. The chain is Large tegument protein deneddylase (UL48) from Homo sapiens (Human).